The following is a 718-amino-acid chain: Heme peroxidase 2 (718 aa).

The N-terminal stretch at 1-19 (MNLKPTILLFTILFLKCAT) is a signal peptide. A propeptide spanning residues 20 to 146 (FEVNEETERI…QANRRCSSPP (127 aa)) is cleaved from the precursor. 2 disordered regions span residues 41–64 (RASE…ANSD) and 108–144 (LLQS…RCSS). Residues 45-64 (NSESEQTSQHIIVSQQANSD) show a composition bias toward polar residues. Positions 109 to 118 (LQSSETTTTT) are enriched in low complexity. Residues 126-139 (SKRSAIFRSKRQAN) are compositionally biased toward basic residues. A disulfide bridge connects residues Cys-149 and Cys-164. His-241 (proton acceptor) is an active-site residue. Position 242 (Asp-242) interacts with Ca(2+). A disulfide bridge connects residues Cys-262 and Cys-272. Positions 311, 313, 315, and 317 each coordinate Ca(2+). The N-linked (GlcNAc...) asparagine glycan is linked to Asn-354. A disulfide bridge links Cys-358 with Cys-366. His-477 is a binding site for heme b. N-linked (GlcNAc...) asparagine glycans are attached at residues Asn-551, Asn-592, Asn-662, and Asn-673. Residues Cys-682 and Cys-705 are joined by a disulfide bond.

It belongs to the peroxidase family. Heme b serves as cofactor. As to expression, expressed in the hypodermis and gland cells of the pharynx. Specifically, there is low and transient expression from the distal bulb of the pharynx to the anterior of the buccal cavity. Whole body expression levels increase upon entry into the dauer phase.

It localises to the secreted. It catalyses the reaction 2 a phenolic donor + H2O2 = 2 a phenolic radical donor + 2 H2O. Functionally, peroxidase which is involved in maintaining the cuticle integrity in the hypodermis and pharynx. It thus plays a role in conferring resistance against Gram-positive bacteria such as E.faecalis, S.aureus and C.diphtheriae, and yeast such as C.albicans. The protein is Heme peroxidase 2 of Caenorhabditis elegans.